The following is a 366-amino-acid chain: MKWKQQLDGMQAYKPGKPIEEVQREYGLKEVIKLASNENPFGCSPKVTAYLQNNAVNHALYPDGYAQNLRTAVANHLGVQETQLLFGNGSDDIIAIITRALLYPGVNTIMADLSFSQYWHNAEIEGAEIRKIPCVEGAHDLEAMAAAIDDQTAVIWVCSPNNPTGVVIPDTALRAFLAKVPNDVLVVLDEAYIEYVTHPEHKDTLPIIDQYPNVLLLRTFSKAYGLASFRVGYAIGQPTIIEKLDPVRGPFNNTSLSQAVAAIALSDQEYIEACREANEHGKKQYVEFCEKHNLKYFPSDTNFIFFDTKADSDVIFQELMKKGFIVRSGNALGLPGFIRVTIGTEAQNAALLVQLDNVLKEQGVFA.

Residue lysine 222 is modified to N6-(pyridoxal phosphate)lysine.

Belongs to the class-II pyridoxal-phosphate-dependent aminotransferase family. Histidinol-phosphate aminotransferase subfamily. As to quaternary structure, homodimer. Requires pyridoxal 5'-phosphate as cofactor.

The catalysed reaction is L-histidinol phosphate + 2-oxoglutarate = 3-(imidazol-4-yl)-2-oxopropyl phosphate + L-glutamate. Its pathway is amino-acid biosynthesis; L-histidine biosynthesis; L-histidine from 5-phospho-alpha-D-ribose 1-diphosphate: step 7/9. This Lysinibacillus sphaericus (strain C3-41) protein is Histidinol-phosphate aminotransferase.